Reading from the N-terminus, the 127-residue chain is Prophage antitermination protein Q homolog QuuD (127 aa).

This sequence belongs to the phage antitermination Q type 1 family.

Positively regulate expression of some phage genes. Bacterial host RNA polymerase modified by antitermination proteins transcribes through termination sites that otherwise prevent expression of the regulated genes. In Escherichia coli (strain K12), this protein is Prophage antitermination protein Q homolog QuuD (quuD).